A 210-amino-acid chain; its full sequence is MATNYHDITIAFAGVCQAVSLVQQFAHKGSADREIFANSIKSLLVTQPDSTLAVFDGQLANLKLGLETVQAQMGSPNGKLDTEIGRYWINVLALSQKLNKNPEAKAKLAERLQQIERQLPLYENDIMADQMIANLAAIYSDVISPLGSKIHVLGLQDYLVRPDIQQKIRASLLAGIRAGILWQQVGGTRWQFLFSRRKILNQAQQFYKSI.

The stretch at 103–130 (EAKAKLAERLQQIERQLPLYENDIMADQ) forms a coiled coil.

This sequence belongs to the HflD family.

The protein resides in the cytoplasm. The protein localises to the cell inner membrane. This Actinobacillus pleuropneumoniae serotype 5b (strain L20) protein is High frequency lysogenization protein HflD homolog.